Consider the following 237-residue polypeptide: Intracellular ribonuclease LX (237 aa).

Residues 1 to 24 constitute a propeptide that is removed on maturation; that stretch reads MMKSQKKLLIKIIVVQCLLVLCVT. Q36 is an RNA binding site. A disulfide bridge connects residues C42 and C48. Residues H63, F113, 116 to 117, and 120 to 121 contribute to the RNA site; these read HE and KH. Residue H63 is the Proton donor of the active site. Cystine bridges form between C78–C124, C183–C219, and C199–C210. E117 is a catalytic residue. H121 (proton acceptor) is an active-site residue.

The protein belongs to the RNase T2 family.

The protein resides in the cytoplasm. The catalysed reaction is a ribonucleotidyl-ribonucleotide-RNA + H2O = a 3'-end 3'-phospho-ribonucleotide-RNA + a 5'-end dephospho-ribonucleoside-RNA + H(+). The sequence is that of Intracellular ribonuclease LX (RNALX) from Solanum lycopersicum (Tomato).